The following is a 366-amino-acid chain: Ribosomal RNA large subunit methyltransferase M (366 aa).

S-adenosyl-L-methionine-binding positions include Ser-188, 221–224, Asp-240, Asp-260, and Asp-277; that span reads CPGG. The Proton acceptor role is filled by Lys-306.

It belongs to the class I-like SAM-binding methyltransferase superfamily. RNA methyltransferase RlmE family. RlmM subfamily. As to quaternary structure, monomer.

The protein resides in the cytoplasm. It catalyses the reaction cytidine(2498) in 23S rRNA + S-adenosyl-L-methionine = 2'-O-methylcytidine(2498) in 23S rRNA + S-adenosyl-L-homocysteine + H(+). In terms of biological role, catalyzes the 2'-O-methylation at nucleotide C2498 in 23S rRNA. The protein is Ribosomal RNA large subunit methyltransferase M of Cronobacter sakazakii (strain ATCC BAA-894) (Enterobacter sakazakii).